An 825-amino-acid chain; its full sequence is MDVSLCPAKCSFWRIFLLGSVWLDYVGSVLACPANCVCSKTEINCRRPDDGNLFPLLEGQDSGNSNGNASINITDISRNITSIHIENWRSLHTLNAVDMELYTGLQKLTIKNSGLRSIQPRAFAKNPHLRYINLSSNRLTTLSWQLFQTLSLRELQLEQNFFNCSCDIRWMQLWQEQGEAKLNSQNLYCINTDGSQLPLFRMNISQCDLPEISVSHVNLTVREGDNAVITCNGSGSPLPDVDWIVTGLQSINTHQTNLNWTNVHAINLTLVNVTSEDNGFTLTCIAENVVGMSNASVALTVYYPPRVVSLEEPELRLEHCIEFVVRGNPPPTLHWLHNGQPLRESKIIHVEYYQEGEISEGCLLFNKPTHYNNGNYTLIAKNPLGTANQTISGHFLKEPFPESTDNFILFDEVSPTPPITVTHKPEEDTFGVSIAVGLAAFACVLLVVLFVMINKYGRRSKFGMKGPVAVISGEEDSASPLHHINHGITTPSSLDAGPDTVVIGMTRIPVIENPQYFRQGHNCHKPDTYVQHIKRRDIVLKRELGEGAFGKVFLAECYNLSPTKDKMLVAVKALKDPTLAARKDFQREAELLTNLQHEHIVKFYGVCGDGDPLIMVFEYMKHGDLNKFLRAHGPDAMILVDGQPRQAKGELGLSQMLHIASQIASGMVYLASQHFVHRDLATRNCLVGANLLVKIGDFGMSRDVYSTDYYRVGGHTMLPIRWMPPESIMYRKFTTESDVWSFGVILWEIFTYGKQPWFQLSNTEVIECITQGRVLERPRVCPKEVYDVMLGCWQREPQQRLNIKEIYKILHALGKATPIYLDILG.

Positions 1–31 are cleaved as a signal peptide; the sequence is MDVSLCPAKCSFWRIFLLGSVWLDYVGSVLA. Cystine bridges form between cysteine 32-cysteine 38 and cysteine 36-cysteine 45. Residues 32–429 are Extracellular-facing; sequence CPANCVCSKT…TVTHKPEEDT (398 aa). 3 N-linked (GlcNAc...) asparagine glycosylation sites follow: asparagine 68, asparagine 72, and asparagine 79. 2 LRR repeats span residues 104-125 and 128-149; these read GLQKLTIKNSGLRSIQPRAFAK and HLRYINLSSNRLTTLSWQLFQT. Residues asparagine 133 and asparagine 163 are each glycosylated (N-linked (GlcNAc...) asparagine). An LRRCT domain is found at 160-209; that stretch reads NFFNCSCDIRWMQLWQEQGEAKLNSQNLYCINTDGSQLPLFRMNISQCDL. Disulfide bonds link cysteine 164/cysteine 189 and cysteine 166/cysteine 207. 7 N-linked (GlcNAc...) asparagine glycosylation sites follow: asparagine 203, asparagine 218, asparagine 232, asparagine 259, asparagine 267, asparagine 272, and asparagine 294. 2 consecutive Ig-like C2-type domains span residues 210–300 and 309–382; these read PEIS…VALT and SLEE…IAKN. Cysteines 231 and 284 form a disulfide. Cysteine 320 and cysteine 362 form a disulfide bridge. N-linked (GlcNAc...) asparagine glycosylation is found at asparagine 375 and asparagine 388. The chain crosses the membrane as a helical span at residues 430–453; that stretch reads FGVSIAVGLAAFACVLLVVLFVMI. At 454–825 the chain is on the cytoplasmic side; the sequence is NKYGRRSKFG…ATPIYLDILG (372 aa). Serine 493 bears the Phosphoserine mark. Phosphotyrosine; by autocatalysis is present on tyrosine 516. The Protein kinase domain occupies 538–825; sequence IVLKRELGEG…ATPIYLDILG (288 aa). Residues 544-552 and lysine 572 each bind ATP; that span reads LGEGAFGKV. Aspartate 679 (proton acceptor) is an active-site residue. Residues tyrosine 705, tyrosine 709, and tyrosine 710 each carry the phosphotyrosine; by autocatalysis modification.

This sequence belongs to the protein kinase superfamily. Tyr protein kinase family. Insulin receptor subfamily. In terms of assembly, exists in a dynamic equilibrium between monomeric (low affinity) and dimeric (high affinity) structures. Binds SH2B2. Interacts with SQSTM1 and KIDINS220. Interacts with PTPRS. Interacts with MAPK8IP3/JIP3. Ligand-mediated auto-phosphorylation.

The protein localises to the membrane. The catalysed reaction is L-tyrosyl-[protein] + ATP = O-phospho-L-tyrosyl-[protein] + ADP + H(+). Its function is as follows. Receptor tyrosine kinase involved in nervous system and probably heart development. Upon binding of its ligand NTF3/neurotrophin-3, NTRK3 autophosphorylates and activates different signaling pathways, including the phosphatidylinositol 3-kinase/AKT and the MAPK pathways, that control cell survival and differentiation. The sequence is that of NT-3 growth factor receptor (NTRK3) from Pan troglodytes (Chimpanzee).